Here is a 325-residue protein sequence, read N- to C-terminus: NADH-quinone oxidoreductase subunit H (325 aa).

A run of 8 helical transmembrane segments spans residues 11–31, 81–101, 114–134, 154–174, 186–206, 237–257, 265–285, and 304–324; these read ILLT…CGAF, FIFT…FAIV, IGIL…LFAG, VSYE…AGSF, MWNI…GVAV, FFVG…TLFF, LPSF…FILI, and ICLP…LYNA.

It belongs to the complex I subunit 1 family. NDH-1 is composed of 13 different subunits. Subunits NuoA, H, J, K, L, M, N constitute the membrane sector of the complex.

The protein resides in the cell inner membrane. It catalyses the reaction a quinone + NADH + 5 H(+)(in) = a quinol + NAD(+) + 4 H(+)(out). Functionally, NDH-1 shuttles electrons from NADH, via FMN and iron-sulfur (Fe-S) centers, to quinones in the respiratory chain. The immediate electron acceptor for the enzyme in this species is believed to be ubiquinone. Couples the redox reaction to proton translocation (for every two electrons transferred, four hydrogen ions are translocated across the cytoplasmic membrane), and thus conserves the redox energy in a proton gradient. This subunit may bind ubiquinone. The protein is NADH-quinone oxidoreductase subunit H of Proteus mirabilis (strain HI4320).